A 612-amino-acid polypeptide reads, in one-letter code: MSAELIAVYKDEQIIDLESAKVLGLSDGIKALNGTEPIYFDDSPLALEVIRHSCAHLLAQSLKALYPDAKFFVGPVVEEGFYYDFKTSSKISEEDLPKIEAKMKEFAKLKLAITKETLTREQALERFKGDELKHAVMSKIGGDAFGVYQQGEFEDLCKGPHLPNTRFLNHFKLTKLAGAYLGGDENNEMLIRIYGIAFATKEGLKDYLFQIEEAKKRDHRKLGVELGLFSFDDEIGAGLPLWLPKGARLRKRIEDLLSQALLLRGYEPVKGPEILKSDVWKISGHYDNYKENMYFTTIDEQEYGIKPMNCVGHIKVYQSALHSYRDLPLRFYEYGVVHRHEKSGVLHGLLRVREFTQDDAHIFCSFEQIQSEVSAILDFTHKIMQAFDFSYEMELSTRPAKSIGDDKVWEKATNALKEALKEHRIDYKIDEGGGAFYGPKIDIKITDALKRKWQCGTIQVDMNLPERFKLAFTNEYNHAEQPVMIHRAILGSFERFIAILSEHFGGNFPFFVAPTQIALIPINEEHHVFALKLKEALKKRDIFVEVLDKNDSLNKKVRLAEKQKIPMILVLGNEEVETEILSIRDREKQDQYKMPLKEFLNMVESKMQEVSF.

Residues 218–509 (DHRKLGVELG…LSEHFGGNFP (292 aa)) are catalytic. Residues cysteine 310, histidine 361, and histidine 486 each contribute to the Zn(2+) site.

Belongs to the class-II aminoacyl-tRNA synthetase family. In terms of assembly, homodimer. Requires Zn(2+) as cofactor.

The protein resides in the cytoplasm. The enzyme catalyses tRNA(Thr) + L-threonine + ATP = L-threonyl-tRNA(Thr) + AMP + diphosphate + H(+). Functionally, catalyzes the attachment of threonine to tRNA(Thr) in a two-step reaction: L-threonine is first activated by ATP to form Thr-AMP and then transferred to the acceptor end of tRNA(Thr). Also edits incorrectly charged L-seryl-tRNA(Thr). The sequence is that of Threonine--tRNA ligase from Helicobacter pylori (strain ATCC 700392 / 26695) (Campylobacter pylori).